A 460-amino-acid polypeptide reads, in one-letter code: Bifunctional protein GlmU (460 aa).

Positions 1–235 are pyrophosphorylase; sequence MALSAAIVLA…PLTVEGVNDR (235 aa). UDP-N-acetyl-alpha-D-glucosamine is bound by residues 9 to 12, lysine 23, glutamine 76, and 81 to 82; these read LAAG and GT. Aspartate 109 contacts Mg(2+). UDP-N-acetyl-alpha-D-glucosamine is bound by residues glycine 146, glutamate 161, asparagine 176, and asparagine 233. Mg(2+) is bound at residue asparagine 233. The linker stretch occupies residues 236–256; it reads VQLAALSKTYNRRVCERWMRD. Residues 257–460 are N-acetyltransferase; the sequence is GVTILDPETT…VEGWKPAWER (204 aa). 2 residues coordinate UDP-N-acetyl-alpha-D-glucosamine: arginine 338 and lysine 356. Catalysis depends on histidine 368, which acts as the Proton acceptor. UDP-N-acetyl-alpha-D-glucosamine-binding residues include tyrosine 371 and asparagine 382. Acetyl-CoA is bound by residues 391 to 392 and alanine 428; that span reads NY.

It in the N-terminal section; belongs to the N-acetylglucosamine-1-phosphate uridyltransferase family. In the C-terminal section; belongs to the transferase hexapeptide repeat family. As to quaternary structure, homotrimer. Mg(2+) is required as a cofactor.

It is found in the cytoplasm. The enzyme catalyses alpha-D-glucosamine 1-phosphate + acetyl-CoA = N-acetyl-alpha-D-glucosamine 1-phosphate + CoA + H(+). It carries out the reaction N-acetyl-alpha-D-glucosamine 1-phosphate + UTP + H(+) = UDP-N-acetyl-alpha-D-glucosamine + diphosphate. It functions in the pathway nucleotide-sugar biosynthesis; UDP-N-acetyl-alpha-D-glucosamine biosynthesis; N-acetyl-alpha-D-glucosamine 1-phosphate from alpha-D-glucosamine 6-phosphate (route II): step 2/2. The protein operates within nucleotide-sugar biosynthesis; UDP-N-acetyl-alpha-D-glucosamine biosynthesis; UDP-N-acetyl-alpha-D-glucosamine from N-acetyl-alpha-D-glucosamine 1-phosphate: step 1/1. Its pathway is bacterial outer membrane biogenesis; LPS lipid A biosynthesis. Its function is as follows. Catalyzes the last two sequential reactions in the de novo biosynthetic pathway for UDP-N-acetylglucosamine (UDP-GlcNAc). The C-terminal domain catalyzes the transfer of acetyl group from acetyl coenzyme A to glucosamine-1-phosphate (GlcN-1-P) to produce N-acetylglucosamine-1-phosphate (GlcNAc-1-P), which is converted into UDP-GlcNAc by the transfer of uridine 5-monophosphate (from uridine 5-triphosphate), a reaction catalyzed by the N-terminal domain. In Bifidobacterium longum (strain NCC 2705), this protein is Bifunctional protein GlmU.